The chain runs to 49 residues: Large ribosomal subunit protein bL33 (49 aa).

The protein belongs to the bacterial ribosomal protein bL33 family.

This chain is Large ribosomal subunit protein bL33, found in Alkaliphilus metalliredigens (strain QYMF).